The primary structure comprises 493 residues: Glutamyl-tRNA(Gln) amidotransferase subunit A (493 aa).

Active-site charge relay system residues include K78 and S158. The active-site Acyl-ester intermediate is S182.

It belongs to the amidase family. GatA subfamily. In terms of assembly, heterotrimer of A, B and C subunits.

The catalysed reaction is L-glutamyl-tRNA(Gln) + L-glutamine + ATP + H2O = L-glutaminyl-tRNA(Gln) + L-glutamate + ADP + phosphate + H(+). Allows the formation of correctly charged Gln-tRNA(Gln) through the transamidation of misacylated Glu-tRNA(Gln) in organisms which lack glutaminyl-tRNA synthetase. The reaction takes place in the presence of glutamine and ATP through an activated gamma-phospho-Glu-tRNA(Gln). The polypeptide is Glutamyl-tRNA(Gln) amidotransferase subunit A (Methylorubrum extorquens (strain PA1) (Methylobacterium extorquens)).